The sequence spans 493 residues: MISCNILGITIAAFITSTLAAYSSNGVNVMYYWGQNSAGGSNTQGSLVSYCQSGQVDVIILSFLNKFNMGGLPEINLASACEQTFFPNTNLLHCPTVGSDIKTCQSNGVKVLLSLGGAAGSYGFSSDSEGQTFAETIWNLFGGGTSDTRPFDDAVIDGIDLDIEGGSSTGYAAFVTALRSKGHFLIGAAPQCPFPDAILGSVIDAVGLDFVNVQFYNNVCSVASGSSFNFDVWNDWAKNKSPNKNIKVMLTVPGSSTAAGSGYASIAELGPIVSSVISQYSSFGGVSVWDASQAWNNNGFHSELYSIVHGSSAALGQAARKTPFPNTSSITTTSLATASSALFPLLYAGRSCSSQSKVSCTSTGSYTICNYGKWVTAPCPPGVICLSSAQSNNTDLTVSAQFFITSFAGGSFKAIINARRTTLTPFEKMKTIEFTVPDHVRLSQCNLGKIEQVGRSVRIRLKDHPNMAFVLNLSGNVSSDAFVAPDPSSWRFS.

Residues 1 to 20 (MISCNILGITIAAFITSTLA) form the signal peptide. The GH18 domain occupies 27 to 318 (VNVMYYWGQN…HGSSAALGQA (292 aa)). E164 serves as the catalytic Proton donor.

It belongs to the glycosyl hydrolase 18 family. Chitinase class III subfamily.

It carries out the reaction Random endo-hydrolysis of N-acetyl-beta-D-glucosaminide (1-&gt;4)-beta-linkages in chitin and chitodextrins.. In Rhizopus niveus, this protein is Chitinase 1 (CHI1).